Here is a 153-residue protein sequence, read N- to C-terminus: Heavy metal-associated isoprenylated plant protein 26 (153 aa).

One can recognise an HMA domain in the interval 25–89 (LQTVEIKVKM…MSHRTGKKVE (65 aa)). Residues Cys-36 and Cys-39 each coordinate a metal cation. Cys-150 bears the Cysteine methyl ester mark. The S-farnesyl cysteine moiety is linked to residue Cys-150. A propeptide spans 151-153 (VVM) (removed in mature form).

It belongs to the HIPP family. As to quaternary structure, interacts with ZHD11/HB29 and ACBP2 (via ankyrin repeats). May also interact with HB21. Expressed in roots, stems and flowers. Lower expression in siliques and leaves. Expressed in the vascular tissues. Detected in lateral roots, shoot apical meristem, petals of unopened flowers and weak expression in leaf vasculature.

The protein localises to the nucleus membrane. Its subcellular location is the cell membrane. In terms of biological role, heavy-metal-binding protein. Binds lead, cadmium and copper. May be involved in heavy-metal transport. May be involved in cadmium transport and play a role in cadmium detoxification. The protein is Heavy metal-associated isoprenylated plant protein 26 of Arabidopsis thaliana (Mouse-ear cress).